Consider the following 207-residue polypeptide: Urease accessory protein UreG (207 aa).

14–21 (GPVGSGKT) serves as a coordination point for GTP.

The protein belongs to the SIMIBI class G3E GTPase family. UreG subfamily. In terms of assembly, homodimer. UreD, UreF and UreG form a complex that acts as a GTP-hydrolysis-dependent molecular chaperone, activating the urease apoprotein by helping to assemble the nickel containing metallocenter of UreC. The UreE protein probably delivers the nickel.

The protein localises to the cytoplasm. Its function is as follows. Facilitates the functional incorporation of the urease nickel metallocenter. This process requires GTP hydrolysis, probably effectuated by UreG. The polypeptide is Urease accessory protein UreG (Pseudomonas putida (strain GB-1)).